The primary structure comprises 462 residues: Argininosuccinate lyase (462 aa).

Belongs to the lyase 1 family. Argininosuccinate lyase subfamily.

Its subcellular location is the cytoplasm. The catalysed reaction is 2-(N(omega)-L-arginino)succinate = fumarate + L-arginine. The protein operates within amino-acid biosynthesis; L-arginine biosynthesis; L-arginine from L-ornithine and carbamoyl phosphate: step 3/3. This chain is Argininosuccinate lyase, found in Caldicellulosiruptor saccharolyticus (strain ATCC 43494 / DSM 8903 / Tp8T 6331).